The chain runs to 272 residues: HMP-PP phosphatase (272 aa).

Catalysis depends on aspartate 8, which acts as the Nucleophile. Residues aspartate 8, aspartate 10, and aspartate 212 each coordinate Mg(2+).

The protein belongs to the HAD-like hydrolase superfamily. Cof family. The cofactor is Mg(2+).

It catalyses the reaction 4-amino-2-methyl-5-(diphosphooxymethyl)pyrimidine + H2O = 4-amino-2-methyl-5-(phosphooxymethyl)pyrimidine + phosphate + H(+). In terms of biological role, catalyzes the hydrolysis of 4-amino-2-methyl-5-hydroxymethylpyrimidine pyrophosphate (HMP-PP) to 4-amino-2-methyl-5-hydroxymethylpyrimidine phosphate (HMP-P). This Cronobacter sakazakii (strain ATCC BAA-894) (Enterobacter sakazakii) protein is HMP-PP phosphatase.